The primary structure comprises 405 residues: Formate-dependent phosphoribosylglycinamide formyltransferase (405 aa).

Residues 22-23 (EL) and Glu82 each bind N(1)-(5-phospho-beta-D-ribosyl)glycinamide. ATP is bound by residues Arg115, Lys162, 167 to 172 (SSGKGQ), 202 to 205 (EGFI), and Glu210. In terms of domain architecture, ATP-grasp spans 120–320 (RLAAETLGLA…EFELHARAIL (201 aa)). Residues Glu279 and Glu291 each contribute to the Mg(2+) site. Residues Asp298, Lys367, and 374–375 (RR) each bind N(1)-(5-phospho-beta-D-ribosyl)glycinamide.

It belongs to the PurK/PurT family. As to quaternary structure, homodimer.

The enzyme catalyses N(1)-(5-phospho-beta-D-ribosyl)glycinamide + formate + ATP = N(2)-formyl-N(1)-(5-phospho-beta-D-ribosyl)glycinamide + ADP + phosphate + H(+). It functions in the pathway purine metabolism; IMP biosynthesis via de novo pathway; N(2)-formyl-N(1)-(5-phospho-D-ribosyl)glycinamide from N(1)-(5-phospho-D-ribosyl)glycinamide (formate route): step 1/1. Involved in the de novo purine biosynthesis. Catalyzes the transfer of formate to 5-phospho-ribosyl-glycinamide (GAR), producing 5-phospho-ribosyl-N-formylglycinamide (FGAR). Formate is provided by PurU via hydrolysis of 10-formyl-tetrahydrofolate. In Delftia acidovorans (strain DSM 14801 / SPH-1), this protein is Formate-dependent phosphoribosylglycinamide formyltransferase.